The following is a 131-amino-acid chain: Probable histone H2A.3 (131 aa).

The interval 1–23 (MAGRGKQLGSGAAKKSTSRSSKA) is disordered. Residues 9 to 23 (GSGAAKKSTSRSSKA) are compositionally biased toward low complexity.

It belongs to the histone H2A family. The nucleosome is a histone octamer containing two molecules each of H2A, H2B, H3 and H4 assembled in one H3-H4 heterotetramer and two H2A-H2B heterodimers. The octamer wraps approximately 147 bp of DNA. In terms of processing, not ubiquitinated. Expressed in meristems and dividing cells.

It is found in the nucleus. It localises to the chromosome. Its function is as follows. Core component of nucleosome. Nucleosomes wrap and compact DNA into chromatin, limiting DNA accessibility to the cellular machineries which require DNA as a template. Histones thereby play a central role in transcription regulation, DNA repair, DNA replication and chromosomal stability. DNA accessibility is regulated via a complex set of post-translational modifications of histones, also called histone code, and nucleosome remodeling. This is Probable histone H2A.3 from Arabidopsis thaliana (Mouse-ear cress).